The primary structure comprises 61 residues: uncharacterized protein (61 aa).

This is an uncharacterized protein from Acidianus bottle-shaped virus (isolate Italy/Pozzuoli) (ABV).